We begin with the raw amino-acid sequence, 75 residues long: Conotoxin TsMEKL-011 (75 aa).

A signal peptide spans 1–19; that stretch reads MEKLTILLLVAAVLMSTQA. Positions 20–45 are excised as a propeptide; the sequence is LIQRGGAKRRKVNFFSIREPGAEDWR. 3 disulfide bridges follow: C49–C63, C56–C67, and C62–C71.

Belongs to the conotoxin O2 superfamily. In terms of tissue distribution, expressed by the venom duct.

It localises to the secreted. The polypeptide is Conotoxin TsMEKL-011 (Conus tessulatus (Tessellate cone)).